The following is a 404-amino-acid chain: Probable tRNA sulfurtransferase (404 aa).

Positions 60–165 constitute a THUMP domain; that stretch reads QPVVEALKLV…DEAAYISYEE (106 aa). Residues 183–184, 208–209, arginine 265, glycine 287, and glutamine 296 each bind ATP; these read ML and HF.

It belongs to the ThiI family.

It localises to the cytoplasm. It carries out the reaction [ThiI sulfur-carrier protein]-S-sulfanyl-L-cysteine + a uridine in tRNA + 2 reduced [2Fe-2S]-[ferredoxin] + ATP + H(+) = [ThiI sulfur-carrier protein]-L-cysteine + a 4-thiouridine in tRNA + 2 oxidized [2Fe-2S]-[ferredoxin] + AMP + diphosphate. The enzyme catalyses [ThiS sulfur-carrier protein]-C-terminal Gly-Gly-AMP + S-sulfanyl-L-cysteinyl-[cysteine desulfurase] + AH2 = [ThiS sulfur-carrier protein]-C-terminal-Gly-aminoethanethioate + L-cysteinyl-[cysteine desulfurase] + A + AMP + 2 H(+). It participates in cofactor biosynthesis; thiamine diphosphate biosynthesis. Catalyzes the ATP-dependent transfer of a sulfur to tRNA to produce 4-thiouridine in position 8 of tRNAs, which functions as a near-UV photosensor. Also catalyzes the transfer of sulfur to the sulfur carrier protein ThiS, forming ThiS-thiocarboxylate. This is a step in the synthesis of thiazole, in the thiamine biosynthesis pathway. The sulfur is donated as persulfide by IscS. This Streptococcus pyogenes serotype M5 (strain Manfredo) protein is Probable tRNA sulfurtransferase.